Reading from the N-terminus, the 241-residue chain is Probable transcriptional regulatory protein LMOf2365_1554 (241 aa).

A compositionally biased stretch (polar residues) spans 1–14 (MSGHSKWNNIQGRK). Residues 1 to 22 (MSGHSKWNNIQGRKNAQDSKRS) form a disordered region.

It belongs to the TACO1 family.

The protein localises to the cytoplasm. The polypeptide is Probable transcriptional regulatory protein LMOf2365_1554 (Listeria monocytogenes serotype 4b (strain F2365)).